The sequence spans 230 residues: Cytochrome c oxidase subunit 2 (230 aa).

Over 1–14 (MAHPSQLGFQDAAS) the chain is Mitochondrial intermembrane. A helical membrane pass occupies residues 15-45 (PVMEELLHFHDHTLMIVFLISTLVLYIIMAM). At 46–59 (VSTKLTNKYILDSQ) the chain is on the mitochondrial matrix side. A helical transmembrane segment spans residues 60 to 87 (EIEIVWTILPAVILIMIALPSLRILYLM). Residues 88–230 (DEINDPHLTI…SWSSLMLEEA (143 aa)) lie on the Mitochondrial intermembrane side of the membrane. Residues His161, Cys196, Glu198, Cys200, His204, and Met207 each contribute to the Cu cation site. Glu198 is a Mg(2+) binding site.

Belongs to the cytochrome c oxidase subunit 2 family. As to quaternary structure, component of the cytochrome c oxidase (complex IV, CIV), a multisubunit enzyme composed of 14 subunits. The complex is composed of a catalytic core of 3 subunits MT-CO1, MT-CO2 and MT-CO3, encoded in the mitochondrial DNA, and 11 supernumerary subunits COX4I, COX5A, COX5B, COX6A, COX6B, COX6C, COX7A, COX7B, COX7C, COX8 and NDUFA4, which are encoded in the nuclear genome. The complex exists as a monomer or a dimer and forms supercomplexes (SCs) in the inner mitochondrial membrane with NADH-ubiquinone oxidoreductase (complex I, CI) and ubiquinol-cytochrome c oxidoreductase (cytochrome b-c1 complex, complex III, CIII), resulting in different assemblies (supercomplex SCI(1)III(2)IV(1) and megacomplex MCI(2)III(2)IV(2)). Found in a complex with TMEM177, COA6, COX18, COX20, SCO1 and SCO2. Interacts with TMEM177 in a COX20-dependent manner. Interacts with COX20. Interacts with COX16. Requires Cu cation as cofactor.

It localises to the mitochondrion inner membrane. The enzyme catalyses 4 Fe(II)-[cytochrome c] + O2 + 8 H(+)(in) = 4 Fe(III)-[cytochrome c] + 2 H2O + 4 H(+)(out). In terms of biological role, component of the cytochrome c oxidase, the last enzyme in the mitochondrial electron transport chain which drives oxidative phosphorylation. The respiratory chain contains 3 multisubunit complexes succinate dehydrogenase (complex II, CII), ubiquinol-cytochrome c oxidoreductase (cytochrome b-c1 complex, complex III, CIII) and cytochrome c oxidase (complex IV, CIV), that cooperate to transfer electrons derived from NADH and succinate to molecular oxygen, creating an electrochemical gradient over the inner membrane that drives transmembrane transport and the ATP synthase. Cytochrome c oxidase is the component of the respiratory chain that catalyzes the reduction of oxygen to water. Electrons originating from reduced cytochrome c in the intermembrane space (IMS) are transferred via the dinuclear copper A center (CU(A)) of subunit 2 and heme A of subunit 1 to the active site in subunit 1, a binuclear center (BNC) formed by heme A3 and copper B (CU(B)). The BNC reduces molecular oxygen to 2 water molecules using 4 electrons from cytochrome c in the IMS and 4 protons from the mitochondrial matrix. This is Cytochrome c oxidase subunit 2 (MT-CO2) from Squalus acanthias (Spiny dogfish).